Here is a 673-residue protein sequence, read N- to C-terminus: MSKPFKLNSAFKPSGDQPEAIRRLEEGLEDGLAHQTLLGVTGSGKTFTIANVIADLQRPTMVLAPNKTLAAQLYGEMKEFFPENAVEYFVSYYDYYQPEAYVPSSDTFIEKDASVNEHIEQMRLSATKAMLERRDVIVVASVSAIYGLGDPDLYLKMMLHLTVGMIIDQRAILRRLAELQYARNDQAFQRGTFRVRGEVIDIFPAESDDIALRVELFDEEVERLSLFDPLTGQIVSTIPRFTIYPKTHYVTPRERIVQAMEEIKEELAARRKVLLENNKLLEEQRLTQRTQFDLEMMDELGYCSGIENYSRFLSGRGPGEPPPTLFDYLPADGLLVVDESHVTIPQIGGMYRGDRARKETLVEYGFRLPSALDNRPLKFEEFEALAPQTIYVSATPGNYELEKSGGDVVDQVVRPTGLLDPIIEVRPVATQVDDLLSEIRQRAAINERVLVTTLTKRMAEDLTEYLEEHGERVRYLHSDIDTVERMEIIRDLRLGEFDVLVGINLLREGLDMPEVSLVAILDADKEGFLRSERSLIQTIGRAARNVNGKAILYGDRSTPSMAKAIGETERRREKQQKYNEEHGITPQGLNKKVVDILALGQNIAKTKAKGRGKSRPIVEPDNVPMDMLPKALQQKIHELEGLMMQHAQNLEFEEAAQIRDQLHQLRELFIAAS.

One can recognise a Helicase ATP-binding domain in the interval 26 to 414; the sequence is EGLEDGLAHQ…GGDVVDQVVR (389 aa). 39–46 lines the ATP pocket; sequence GVTGSGKT. A Beta-hairpin motif is present at residues 92–115; it reads YYDYYQPEAYVPSSDTFIEKDASV. The Helicase C-terminal domain maps to 431–597; the sequence is QVDDLLSEIR…GLNKKVVDIL (167 aa). The UVR domain maps to 633–668; that stretch reads QQKIHELEGLMMQHAQNLEFEEAAQIRDQLHQLREL.

This sequence belongs to the UvrB family. Forms a heterotetramer with UvrA during the search for lesions. Interacts with UvrC in an incision complex.

Its subcellular location is the cytoplasm. Its function is as follows. The UvrABC repair system catalyzes the recognition and processing of DNA lesions. A damage recognition complex composed of 2 UvrA and 2 UvrB subunits scans DNA for abnormalities. Upon binding of the UvrA(2)B(2) complex to a putative damaged site, the DNA wraps around one UvrB monomer. DNA wrap is dependent on ATP binding by UvrB and probably causes local melting of the DNA helix, facilitating insertion of UvrB beta-hairpin between the DNA strands. Then UvrB probes one DNA strand for the presence of a lesion. If a lesion is found the UvrA subunits dissociate and the UvrB-DNA preincision complex is formed. This complex is subsequently bound by UvrC and the second UvrB is released. If no lesion is found, the DNA wraps around the other UvrB subunit that will check the other stand for damage. This Shigella flexneri protein is UvrABC system protein B.